The primary structure comprises 356 residues: S-adenosylmethionine:tRNA ribosyltransferase-isomerase (356 aa).

The protein belongs to the QueA family. As to quaternary structure, monomer.

The protein resides in the cytoplasm. It catalyses the reaction 7-aminomethyl-7-carbaguanosine(34) in tRNA + S-adenosyl-L-methionine = epoxyqueuosine(34) in tRNA + adenine + L-methionine + 2 H(+). It participates in tRNA modification; tRNA-queuosine biosynthesis. In terms of biological role, transfers and isomerizes the ribose moiety from AdoMet to the 7-aminomethyl group of 7-deazaguanine (preQ1-tRNA) to give epoxyqueuosine (oQ-tRNA). This is S-adenosylmethionine:tRNA ribosyltransferase-isomerase from Escherichia coli O6:H1 (strain CFT073 / ATCC 700928 / UPEC).